We begin with the raw amino-acid sequence, 300 residues long: Ribosomal protein L11 methyltransferase (300 aa).

S-adenosyl-L-methionine-binding residues include Thr-152, Gly-173, Asp-195, and Asn-234.

This sequence belongs to the methyltransferase superfamily. PrmA family.

It is found in the cytoplasm. It carries out the reaction L-lysyl-[protein] + 3 S-adenosyl-L-methionine = N(6),N(6),N(6)-trimethyl-L-lysyl-[protein] + 3 S-adenosyl-L-homocysteine + 3 H(+). Functionally, methylates ribosomal protein L11. This chain is Ribosomal protein L11 methyltransferase, found in Burkholderia orbicola (strain MC0-3).